The sequence spans 280 residues: Ribosomal RNA small subunit methyltransferase A (280 aa).

6 residues coordinate S-adenosyl-L-methionine: His13, Leu15, Gly40, Glu61, Asp85, and Asn105.

The protein belongs to the class I-like SAM-binding methyltransferase superfamily. rRNA adenine N(6)-methyltransferase family. RsmA subfamily.

The protein resides in the cytoplasm. The enzyme catalyses adenosine(1518)/adenosine(1519) in 16S rRNA + 4 S-adenosyl-L-methionine = N(6)-dimethyladenosine(1518)/N(6)-dimethyladenosine(1519) in 16S rRNA + 4 S-adenosyl-L-homocysteine + 4 H(+). In terms of biological role, specifically dimethylates two adjacent adenosines (A1518 and A1519) in the loop of a conserved hairpin near the 3'-end of 16S rRNA in the 30S particle. May play a critical role in biogenesis of 30S subunits. The polypeptide is Ribosomal RNA small subunit methyltransferase A (Phocaeicola vulgatus (strain ATCC 8482 / DSM 1447 / JCM 5826 / CCUG 4940 / NBRC 14291 / NCTC 11154) (Bacteroides vulgatus)).